A 435-amino-acid polypeptide reads, in one-letter code: Ribulose bisphosphate carboxylase/oxygenase activase 2, chloroplastic (435 aa).

A chloroplast-targeting transit peptide spans Met-1–Val-56. Gly-165–Ser-172 contacts ATP.

This sequence belongs to the RuBisCO activase family.

Its subcellular location is the plastid. It localises to the chloroplast stroma. Its function is as follows. Activation of RuBisCO (ribulose-1,5-bisphosphate carboxylase/oxygenase; EC 4.1.1.39) involves the ATP-dependent carboxylation of the epsilon-amino group of lysine leading to a carbamate structure. This is Ribulose bisphosphate carboxylase/oxygenase activase 2, chloroplastic (RCA2) from Larrea tridentata (Creosote bush).